The chain runs to 363 residues: Dihydroorotate dehydrogenase (quinone) (363 aa).

FMN is bound by residues 70–74 and Thr94; that span reads AGFDK. Lys74 serves as a coordination point for substrate. Substrate is bound at residue 119-123; that stretch reads NRMGF. FMN is bound by residues Asn147 and Asn180. Asn180 contributes to the substrate binding site. Residue Ser183 is the Nucleophile of the active site. Residue Asn185 participates in substrate binding. 2 residues coordinate FMN: Lys216 and Thr244. Position 245–246 (245–246) interacts with substrate; that stretch reads NT. FMN contacts are provided by residues Gly270, Gly299, and 320-321; that span reads YT.

The protein belongs to the dihydroorotate dehydrogenase family. Type 2 subfamily. Monomer. Requires FMN as cofactor.

It localises to the cell membrane. It catalyses the reaction (S)-dihydroorotate + a quinone = orotate + a quinol. Its pathway is pyrimidine metabolism; UMP biosynthesis via de novo pathway; orotate from (S)-dihydroorotate (quinone route): step 1/1. Functionally, catalyzes the conversion of dihydroorotate to orotate with quinone as electron acceptor. The protein is Dihydroorotate dehydrogenase (quinone) of Corynebacterium diphtheriae (strain ATCC 700971 / NCTC 13129 / Biotype gravis).